The chain runs to 88 residues: ATP synthase epsilon chain (88 aa).

Belongs to the ATPase epsilon chain family. F-type ATPases have 2 components, CF(1) - the catalytic core - and CF(0) - the membrane proton channel. CF(1) has five subunits: alpha(3), beta(3), gamma(1), delta(1), epsilon(1). CF(0) has three main subunits: a, b and c.

The protein localises to the cell inner membrane. Functionally, produces ATP from ADP in the presence of a proton gradient across the membrane. This Chlorobium limicola protein is ATP synthase epsilon chain (atpC).